A 797-amino-acid polypeptide reads, in one-letter code: Kinesin-like protein Klp68D (797 aa).

Residues 19-344 (CVQVVVRCRP…LRYASRAKSI (326 aa)) enclose the Kinesin motor domain. 106 to 113 (GQTGTGKT) contributes to the ATP binding site. Positions 350 to 384 (KNEDPQDAKLKEYQEEIERLKRLIAPQQQQRSEKQ) form a coiled coil. 3 disordered regions span residues 371–450 (RLIA…ELER), 610–656 (SSFP…PSSL), and 722–797 (ANSS…LVNK). Residues 386 to 396 (TIKKQRVKKPK) show a composition bias toward basic residues. Positions 417–431 (QVDEDRDSDGDGAES) are enriched in acidic residues. The segment covering 432–450 (ESDKENEAEVAKSNEELER) has biased composition (basic and acidic residues). Positions 432-580 (ESDKENEAEV…LVKELKRQLL (149 aa)) form a coiled coil. A compositionally biased stretch (basic residues) spans 626-638 (GYRRPVSHPQRRR). Residues 782–791 (KKPASAYPKA) show a composition bias toward low complexity.

The protein belongs to the TRAFAC class myosin-kinesin ATPase superfamily. Kinesin family. Kinesin II subfamily.

The protein resides in the cytoplasm. It localises to the cytoskeleton. In terms of biological role, plus-end directed microtubule motor that may be used for anterograde axonal transport and could conceivably move cargos in fly neurons different than those moved by kinesin heavy chain or other plus-end directed motors. The sequence is that of Kinesin-like protein Klp68D from Drosophila pseudoobscura pseudoobscura (Fruit fly).